The sequence spans 556 residues: 2-succinyl-5-enolpyruvyl-6-hydroxy-3-cyclohexene-1-carboxylate synthase (556 aa).

The protein belongs to the TPP enzyme family. MenD subfamily. As to quaternary structure, homodimer. Mg(2+) serves as cofactor. The cofactor is Mn(2+). It depends on thiamine diphosphate as a cofactor.

It carries out the reaction isochorismate + 2-oxoglutarate + H(+) = 5-enolpyruvoyl-6-hydroxy-2-succinyl-cyclohex-3-ene-1-carboxylate + CO2. It functions in the pathway quinol/quinone metabolism; 1,4-dihydroxy-2-naphthoate biosynthesis; 1,4-dihydroxy-2-naphthoate from chorismate: step 2/7. The protein operates within quinol/quinone metabolism; menaquinone biosynthesis. Catalyzes the thiamine diphosphate-dependent decarboxylation of 2-oxoglutarate and the subsequent addition of the resulting succinic semialdehyde-thiamine pyrophosphate anion to isochorismate to yield 2-succinyl-5-enolpyruvyl-6-hydroxy-3-cyclohexene-1-carboxylate (SEPHCHC). The polypeptide is 2-succinyl-5-enolpyruvyl-6-hydroxy-3-cyclohexene-1-carboxylate synthase (Shigella boydii serotype 18 (strain CDC 3083-94 / BS512)).